Here is a 130-residue protein sequence, read N- to C-terminus: Small ribosomal subunit protein uS8 (130 aa).

The protein belongs to the universal ribosomal protein uS8 family. Part of the 30S ribosomal subunit.

Functionally, one of the primary rRNA binding proteins, it binds directly to 16S rRNA central domain where it helps coordinate assembly of the platform of the 30S subunit. This is Small ribosomal subunit protein uS8 from Thermococcus onnurineus (strain NA1).